The chain runs to 467 residues: MTCRTRFAPSPTGYLHIGGARTALYCWLEARRRNGQFLLRIEDTDRERSTQAAIDAILHAMDWLGLDYDEPPVYQTQRIERYNQVAARLLAEGKAYYAYDSKDTLNAMREAALRTGEKPRYNGAAREANLPYRDDPNRVIRFKNPHTGTVAFDDLIKGRIQIANSELDDMVILRPDGYPTYNFAVVVDDWDMNITEVIRGDDHINNTPRQINLYHALGAPLPTFAHLPMILDEQGAKLSKRTGAADVMQYRDSGYLPHALINYLVRLGWSHGDQELFNRQALIDLFQINDVNSKAARLDMAKLGWVNQHYLKTDDPATLAPPLVWHLEQRGIDVSAGPAPTDVILALRERVQTLKEMAEKAEIWYCPLQRYDEIAVAKHLKPGAETALLHARTLLAALPAWTVDNVDTALRTIATTLEIGMGKVAQPLRVAITGTQVSPDIAYTVYLTGRNEALKRIDAALIKISTA.

A 'HIGH' region motif is present at residues 9 to 19 (PSPTGYLHIGG). The 'KMSKS' region motif lies at 237 to 241 (KLSKR). Lysine 240 contributes to the ATP binding site.

This sequence belongs to the class-I aminoacyl-tRNA synthetase family. Glutamate--tRNA ligase type 1 subfamily. In terms of assembly, monomer.

It is found in the cytoplasm. It carries out the reaction tRNA(Glu) + L-glutamate + ATP = L-glutamyl-tRNA(Glu) + AMP + diphosphate. Its function is as follows. Catalyzes the attachment of glutamate to tRNA(Glu) in a two-step reaction: glutamate is first activated by ATP to form Glu-AMP and then transferred to the acceptor end of tRNA(Glu). The sequence is that of Glutamate--tRNA ligase from Xylella fastidiosa (strain M12).